The chain runs to 251 residues: D-aminoacyl-tRNA deacylase (251 aa).

The protein belongs to the DtdA deacylase family. In terms of assembly, monomer. Zn(2+) is required as a cofactor.

The enzyme catalyses a D-aminoacyl-tRNA + H2O = a tRNA + a D-alpha-amino acid + H(+). The catalysed reaction is glycyl-tRNA(Ala) + H2O = tRNA(Ala) + glycine + H(+). Its function is as follows. D-aminoacyl-tRNA deacylase with broad substrate specificity. By recycling D-aminoacyl-tRNA to D-amino acids and free tRNA molecules, this enzyme counteracts the toxicity associated with the formation of D-aminoacyl-tRNA entities in vivo. The protein is D-aminoacyl-tRNA deacylase of Pyrobaculum aerophilum (strain ATCC 51768 / DSM 7523 / JCM 9630 / CIP 104966 / NBRC 100827 / IM2).